A 315-amino-acid polypeptide reads, in one-letter code: Olfactory receptor 5M1 (315 aa).

At 1 to 25 (MFSPNHTIVTEFILLGLTDDPVLEK) the chain is on the extracellular side. An N-linked (GlcNAc...) asparagine glycan is attached at asparagine 5. A helical membrane pass occupies residues 26-46 (ILFGVFLAIYLITLAGNLCMI). Topologically, residues 47 to 54 (LLIRTNSH) are cytoplasmic. A helical membrane pass occupies residues 55 to 75 (LQTPMYFFLGHLSFVDICYSS). The Extracellular segment spans residues 76–99 (NVTPNMLHNFLSEQKTISYAGCFT). A disulfide bridge connects residues cysteine 97 and cysteine 189. The helical transmembrane segment at 100–120 (QCLLFIALVITEFYILASMAL) threads the bilayer. Topologically, residues 121–139 (DRYVAICSPLHYSSRMSKN) are cytoplasmic. A helical transmembrane segment spans residues 140 to 160 (ICVCLVTIPYMYGFLSGFSQS). The Extracellular portion of the chain corresponds to 161 to 196 (LLTFHLSFCGSLEINHFYCADPPLIMLACSDTRVKK). A helical membrane pass occupies residues 197 to 217 (MAMFVVAGFNLSSSLFIILLS). Residues 218-237 (YLFIFAAIFRIRSAEGRHKA) are Cytoplasmic-facing. Residues 238 to 258 (FSTCASHLTIVTLFYGTLFCM) traverse the membrane as a helical segment. Residues 259–271 (YVRPPSEKSVEES) are Extracellular-facing. Residues 272–292 (KITAVFYTFLSPMLNPLIYSL) form a helical membrane-spanning segment. The Cytoplasmic segment spans residues 293–315 (RNTDVILAMQQMIRGKSFHKIAV).

The protein belongs to the G-protein coupled receptor 1 family.

Its subcellular location is the cell membrane. Its function is as follows. Odorant receptor. In Homo sapiens (Human), this protein is Olfactory receptor 5M1 (OR5M1).